Here is a 212-residue protein sequence, read N- to C-terminus: MKNPMIKNGFLLALFALICTGLVAAVNQQTVDKIKQQEQQELMRVLHQLIPDEMHDNELTAQCTLLLDKDALGTDSPMPAYIATSAGKPVAIAIEAIAPDGYNGNIKLIVGISTKGEVLGVRTLAHQETPGLGDKIDLRKSNWVSQFVGKVLGSADDKQWLVKKDGGDFDQFTGATITPRAYVKAVKNAVWYFNNNQAQIFSLPLNCEANHD.

The helical transmembrane segment at G9–Q29 threads the bilayer. Position 176 is an FMN phosphoryl threonine (T176).

It belongs to the RnfG family. The complex is composed of six subunits: RnfA, RnfB, RnfC, RnfD, RnfE and RnfG. FMN serves as cofactor.

The protein resides in the cell inner membrane. In terms of biological role, part of a membrane-bound complex that couples electron transfer with translocation of ions across the membrane. This is Ion-translocating oxidoreductase complex subunit G from Shewanella baltica (strain OS223).